Here is a 378-residue protein sequence, read N- to C-terminus: Forkhead box protein I1 (378 aa).

2 disordered regions span residues 1–26 and 208–278; these read MSSF…QEPP and DNGN…APCL. Positions 123–217 form a DNA-binding region, fork-head; that stretch reads RPPYSYSALI…DNGNFRRKRK (95 aa). Polar residues predominate over residues 236-248; it reads SSLPVDSPKTTEP.

Expressed in kidney.

Its subcellular location is the nucleus. In terms of biological role, transcriptional activator required for the development of normal hearing, sense of balance and kidney function. Required for the expression of SLC26A4/PDS, JAG1 and COCH in a subset of epithelial cells and the development of the endolymphatic system in the inner ear. Also required for the expression of SLC4A1/AE1, SLC4A9/AE4, ATP6V1B1 and the differentiation of intercalated cells in the epithelium of distal renal tubules. The protein is Forkhead box protein I1 (FOXI1) of Homo sapiens (Human).